Reading from the N-terminus, the 22-residue chain is Cysteine proteinase (22 aa).

A disordered region spans residues 1 to 22; sequence GADDSDWRKKGAVNVIXKDQGQ.

It belongs to the peptidase C1 family.

The protein is Cysteine proteinase of Trichomonas vaginalis.